Consider the following 435-residue polypeptide: MKYFIKTYGCQMNINDSEKIKGILQTQGYEPATREEDADLVILNTCTIREKPDQKVWSHLGEIKKLKSINPNIKIGVCGCMAQRAGYEIASKMPFIDLVFGTKNIHHMPKLLEDVKVGNRAIEILEEEDPSENILDSYPTVRDNSYCAYVTIMRGCDKECTYCVVPFTRGKERSRNPQSILDEVKSLVDSGVMEIHLIGQNVTAYGKDIDYPFYKLLENISKIEGVKRIRFTTGHPIDMTDDIIETMANLPNMVNHLHLPFQAGSDRILELMKRNYTKAYYLNRIEKLKAKIKDITFSTDIIIGFPTETEEDFQHTLDVVQTVEFEQVFSFKYSKRPNTPAYYMEDDLTDEIKTDRIKRLLEIQKAITSKLMQRYKNTVQKVLVEDKKGNTYIGRTTTNVWCNITSSQDILGKEVEVLIAKAGFQSLDGVVQNIL.

In terms of domain architecture, MTTase N-terminal spans Met1 to Val117. The [4Fe-4S] cluster site is built by Cys10, Cys46, Cys80, Cys156, Cys160, and Cys163. In terms of domain architecture, Radical SAM core spans Arg142 to Lys370. The 61-residue stretch at Gln373 to Asn433 folds into the TRAM domain.

It belongs to the methylthiotransferase family. MiaB subfamily. Monomer. Requires [4Fe-4S] cluster as cofactor.

The protein localises to the cytoplasm. It carries out the reaction N(6)-dimethylallyladenosine(37) in tRNA + (sulfur carrier)-SH + AH2 + 2 S-adenosyl-L-methionine = 2-methylsulfanyl-N(6)-dimethylallyladenosine(37) in tRNA + (sulfur carrier)-H + 5'-deoxyadenosine + L-methionine + A + S-adenosyl-L-homocysteine + 2 H(+). Functionally, catalyzes the methylthiolation of N6-(dimethylallyl)adenosine (i(6)A), leading to the formation of 2-methylthio-N6-(dimethylallyl)adenosine (ms(2)i(6)A) at position 37 in tRNAs that read codons beginning with uridine. In Hydrogenobaculum sp. (strain Y04AAS1), this protein is tRNA-2-methylthio-N(6)-dimethylallyladenosine synthase.